Here is a 365-residue protein sequence, read N- to C-terminus: BTB/POZ and TAZ domain-containing protein 1 (365 aa).

Positions 25-96 (TDVEIITSGR…LYSPSVTENE (72 aa)) constitute a BTB domain. A Nuclear localization signal motif is present at residues 193–202 (RKKRRRRHRR). The segment at 205–304 (NLYLQLSEAM…SESCRVPLCR (100 aa)) adopts a TAZ-type zinc-finger fold. The segment at 315-338 (KMVEDTKWKVLVRRVASAKAMSSL) is caM-binding.

In terms of assembly, interacts with CUL3A. Interacts with GTE9/BET9 and GTE11/BET10 through the BTB domain. As to expression, preferentially expressed in young leaves, roots and stems.

Its subcellular location is the nucleus. It localises to the cytoplasm. It participates in protein modification; protein ubiquitination. Functionally, may act as a substrate-specific adapter of an E3 ubiquitin-protein ligase complex (CUL3-RBX1-BTB) which mediates the ubiquitination and subsequent proteasomal degradation of target proteins. Also targeted for degradation by the 26S proteasome pathway. May be involved in gametophyte development. The sequence is that of BTB/POZ and TAZ domain-containing protein 1 (BT1) from Arabidopsis thaliana (Mouse-ear cress).